The following is a 292-amino-acid chain: Inositol monophosphatase 2 (292 aa).

Glu-75, Asp-94, Ile-96, Asp-97, and Asp-231 together coordinate Mg(2+). Glu-75 contacts substrate. Substrate-binding positions include 96 to 99 (IDGT) and Asp-231.

It belongs to the inositol monophosphatase superfamily. Requires Mg(2+) as cofactor.

The enzyme catalyses a myo-inositol phosphate + H2O = myo-inositol + phosphate. It participates in polyol metabolism; myo-inositol biosynthesis; myo-inositol from D-glucose 6-phosphate: step 2/2. Its activity is regulated as follows. Inhibited by Li(+) and Na(+). Functionally, responsible for the provision of inositol required for synthesis of phosphatidylinositol and polyphosphoinositides and involved in the inositol cycle of calcium signaling. This chain is Inositol monophosphatase 2 (INM2), found in Saccharomyces cerevisiae (strain ATCC 204508 / S288c) (Baker's yeast).